Reading from the N-terminus, the 246-residue chain is Acetylglutamate kinase (246 aa).

Substrate is bound by residues 30 to 31 (GG), arginine 52, and asparagine 151.

It belongs to the acetylglutamate kinase family. ArgB subfamily.

The protein localises to the cytoplasm. The catalysed reaction is N-acetyl-L-glutamate + ATP = N-acetyl-L-glutamyl 5-phosphate + ADP. Its pathway is amino-acid biosynthesis; L-arginine biosynthesis; N(2)-acetyl-L-ornithine from L-glutamate: step 2/4. Its function is as follows. Catalyzes the ATP-dependent phosphorylation of N-acetyl-L-glutamate. The sequence is that of Acetylglutamate kinase from Methanopyrus kandleri (strain AV19 / DSM 6324 / JCM 9639 / NBRC 100938).